Here is a 124-residue protein sequence, read N- to C-terminus: Large ribosomal subunit protein bL12 (124 aa).

It belongs to the bacterial ribosomal protein bL12 family. As to quaternary structure, homodimer. Part of the ribosomal stalk of the 50S ribosomal subunit. Forms a multimeric L10(L12)X complex, where L10 forms an elongated spine to which 2 to 4 L12 dimers bind in a sequential fashion. Binds GTP-bound translation factors.

Forms part of the ribosomal stalk which helps the ribosome interact with GTP-bound translation factors. Is thus essential for accurate translation. This chain is Large ribosomal subunit protein bL12, found in Cupriavidus taiwanensis (strain DSM 17343 / BCRC 17206 / CCUG 44338 / CIP 107171 / LMG 19424 / R1) (Ralstonia taiwanensis (strain LMG 19424)).